The sequence spans 688 residues: Collagen alpha-2(IX) chain (688 aa).

Positions 1-22 (MTAVPAPRSLFVLLQVLWLALA) are cleaved as a signal peptide. A triple-helical region 4 (COL4) region spans residues 26 to 162 (GPPGEPGPPG…PGKPGRPGTI (137 aa)). Residues 26 to 171 (GPPGEPGPPG…IQGLEGSADF (146 aa)) form a disordered region. Composition is skewed to pro residues over residues 28–42 (PGEPGPPGPPGPPGV) and 105–126 (LPGPPGLPGPGFAGPPGPPGPV). Positions 128 to 137 (LPGEIGTPGP) are enriched in low complexity. Positions 138-156 (KGDPGPEGPSGPPGPPGKP) are enriched in pro residues. Proline 159 carries the 4-hydroxyproline modification. The nonhelical region 4 (NC4) stretch occupies residues 163–179 (QGLEGSADFLCPTNCPA). O-linked (Xyl...) (glycosaminoglycan) serine glycosylation is present at serine 168. Residues 180–518 (GVKGPQGLQG…PGRQGVVGRA (339 aa)) form a triple-helical region 3 (COL3) region. Residue lysine 182 is modified to 5-hydroxylysine. O-linked (Gal...) hydroxylysine glycosylation is present at lysine 182. The tract at residues 183–517 (GPQGLQGVKG…QPGRQGVVGR (335 aa)) is disordered. Low complexity-rich tracts occupy residues 289 to 314 (PQGITGPKGITGPPGIDGKDGTPGIP) and 392 to 412 (RGPVGQPGPQGRQGPKGEQGP). Residues 435–444 (GPRGGVGDPG) are compositionally biased toward gly residues. Over residues 502-517 (DRGVPGQPGRQGVVGR) the composition is skewed to low complexity. A nonhelical region 3 (NC3) region spans residues 519 to 548 (ASDQHIVDVVLKMIQEQLAEVAVSAKREAL). Residues 549 to 631 (GAAGMVGLPG…PGLPGRPGQA (83 aa)) are triple-helical region 2 (COL2). Positions 553 to 664 (MVGLPGPPGP…GPVGLPGFCE (112 aa)) are disordered. Over residues 598–610 (KRGEKGDRGEMGH) the composition is skewed to basic and acidic residues. The nonhelical region 2 (NC2) stretch occupies residues 632-633 (IN). Residues 634–663 (GKDGDRGSPGAPGEAGRPGRPGPVGLPGFC) form a triple-helical region 1 (COL1) region. The segment at 664 to 688 (EPAACLGASAYTSARLTEPGSIKGP) is nonhelical region 1 (NC1).

It belongs to the fibril-associated collagens with interrupted helices (FACIT) family. Heterotrimer of an alpha 1(IX), an alpha 2(IX) and an alpha 3(IX) chain. The chains are linked to each other by interchain disulfide bonds. Trimers are also cross-linked via hydroxylysines. In terms of processing, covalently linked to the telopeptides of type II collagen by lysine-derived cross-links. Post-translationally, prolines at the third position of the tripeptide repeating unit (G-X-Y) are hydroxylated in some or all of the chains.

The protein localises to the secreted. It is found in the extracellular space. It localises to the extracellular matrix. Structural component of hyaline cartilage and vitreous of the eye. The protein is Collagen alpha-2(IX) chain (Col9a2) of Mus musculus (Mouse).